Here is a 391-residue protein sequence, read N- to C-terminus: Cilia- and flagella-associated protein 263 (391 aa).

The segment at 1 to 21 (MTDDDSETSASETQAQEESDL) is disordered. Coiled coils occupy residues 95–243 (LSVD…NQEL) and 294–369 (LRKE…LKGY).

Belongs to the CFAP263 family. As to quaternary structure, forms a complex with CFAP184; the interaction is required for functional activity in cilia. Interacts with HAP1 and PCM1.

Its subcellular location is the cytoplasm. It is found in the cytoskeleton. It localises to the microtubule organizing center. The protein localises to the centrosome. The protein resides in the centriolar satellite. Its subcellular location is the cell projection. It is found in the cilium. Its function is as follows. Component of centriolar satellites contributing to primary cilium formation. In complex with CFAP263, acts as a regulator of ciliary beating that connects radial spoke 3 (RS3) to the inner dynein arm (IDA) and the nexin-dynein regulatory complex (N-DRC). The complex is positioned parallel to N-DRC and forms a connection between the arch at the base of RS3, the IDA tail and N-DRC. This chain is Cilia- and flagella-associated protein 263 (CFAP263), found in Bos taurus (Bovine).